Here is a 142-residue protein sequence, read N- to C-terminus: Hemoglobin subunit alpha (142 aa).

S1 bears the N-acetylserine mark. In terms of domain architecture, Globin spans 1–142; that stretch reads SLSDKDKAAV…LSLALAEKYR (142 aa). 2 residues coordinate heme b: H59 and H88.

This sequence belongs to the globin family. In terms of assembly, heterotetramer of two alpha chains and two beta chains. In terms of tissue distribution, red blood cells.

Involved in oxygen transport from gills to the various peripheral tissues. The sequence is that of Hemoglobin subunit alpha from Lycodes reticulatus (Arctic eelpout).